Consider the following 1207-residue polypeptide: DNA-directed RNA polymerase subunit beta' (1207 aa).

Zn(2+) contacts are provided by cysteine 60, cysteine 62, cysteine 75, and cysteine 78. 3 residues coordinate Mg(2+): aspartate 450, aspartate 452, and aspartate 454. Cysteine 819, cysteine 893, cysteine 900, and cysteine 903 together coordinate Zn(2+).

Belongs to the RNA polymerase beta' chain family. The RNAP catalytic core consists of 2 alpha, 1 beta, 1 beta' and 1 omega subunit. When a sigma factor is associated with the core the holoenzyme is formed, which can initiate transcription. The cofactor is Mg(2+). Zn(2+) is required as a cofactor.

It catalyses the reaction RNA(n) + a ribonucleoside 5'-triphosphate = RNA(n+1) + diphosphate. Functionally, DNA-dependent RNA polymerase catalyzes the transcription of DNA into RNA using the four ribonucleoside triphosphates as substrates. The polypeptide is DNA-directed RNA polymerase subunit beta' (Streptococcus pyogenes serotype M3 (strain ATCC BAA-595 / MGAS315)).